Reading from the N-terminus, the 688-residue chain is DNA-directed RNA polymerase subunit beta' (688 aa).

Positions 69, 71, 87, and 90 each coordinate Zn(2+). 3 residues coordinate Mg(2+): D493, D495, and D497.

Belongs to the RNA polymerase beta' chain family. RpoC1 subfamily. As to quaternary structure, in plastids the minimal PEP RNA polymerase catalytic core is composed of four subunits: alpha, beta, beta', and beta''. When a (nuclear-encoded) sigma factor is associated with the core the holoenzyme is formed, which can initiate transcription. Mg(2+) is required as a cofactor. Requires Zn(2+) as cofactor.

The protein localises to the plastid. The protein resides in the chloroplast. It catalyses the reaction RNA(n) + a ribonucleoside 5'-triphosphate = RNA(n+1) + diphosphate. In terms of biological role, DNA-dependent RNA polymerase catalyzes the transcription of DNA into RNA using the four ribonucleoside triphosphates as substrates. The chain is DNA-directed RNA polymerase subunit beta' from Chloranthus spicatus (Chulantree).